The primary structure comprises 300 residues: Ubiquitin carboxyl-terminal hydrolase 2 (300 aa).

In terms of domain architecture, UCH catalytic spans 2–220 (SWTTIESDAG…IRFNLMVICK (219 aa)). The active-site Nucleophile is Cys83. His159 acts as the Proton donor in catalysis. One can recognise a ULD domain in the interval 261–290 (NFVGLFVELSKLLVKDRIDKNTWNSTLETA).

This sequence belongs to the peptidase C12 family. In terms of assembly, component of the 26S proteasome. Interacts with rpn10.

The protein resides in the nucleus. The catalysed reaction is Thiol-dependent hydrolysis of ester, thioester, amide, peptide and isopeptide bonds formed by the C-terminal Gly of ubiquitin (a 76-residue protein attached to proteins as an intracellular targeting signal).. Ubiquitin-protein hydrolase is involved both in the processing of ubiquitin precursors and of ubiquitinated proteins. This enzyme is a thiol protease that recognizes and hydrolyzes a peptide bond at the C-terminal glycine of ubiquitin. The sequence is that of Ubiquitin carboxyl-terminal hydrolase 2 (uch2) from Schizosaccharomyces pombe (strain 972 / ATCC 24843) (Fission yeast).